Reading from the N-terminus, the 318-residue chain is ADP-L-glycero-D-manno-heptose-6-epimerase (318 aa).

NADP(+) contacts are provided by residues 10 to 11, 31 to 32, Lys-38, Lys-53, and 79 to 83; these read FI, DD, and EGACS. The Proton acceptor role is filled by Tyr-144. Residue Lys-148 participates in NADP(+) binding. Position 173 (Asn-173) interacts with substrate. Positions 174 and 182 each coordinate NADP(+). Lys-182 serves as the catalytic Proton acceptor. Residues Ser-184, His-191, 205–208, Arg-218, and Tyr-282 each bind substrate; that span reads FEGC.

This sequence belongs to the NAD(P)-dependent epimerase/dehydratase family. HldD subfamily. Homopentamer. Requires NADP(+) as cofactor.

The catalysed reaction is ADP-D-glycero-beta-D-manno-heptose = ADP-L-glycero-beta-D-manno-heptose. Its pathway is nucleotide-sugar biosynthesis; ADP-L-glycero-beta-D-manno-heptose biosynthesis; ADP-L-glycero-beta-D-manno-heptose from D-glycero-beta-D-manno-heptose 7-phosphate: step 4/4. Functionally, catalyzes the interconversion between ADP-D-glycero-beta-D-manno-heptose and ADP-L-glycero-beta-D-manno-heptose via an epimerization at carbon 6 of the heptose. This Aeromonas hydrophila subsp. hydrophila (strain ATCC 7966 / DSM 30187 / BCRC 13018 / CCUG 14551 / JCM 1027 / KCTC 2358 / NCIMB 9240 / NCTC 8049) protein is ADP-L-glycero-D-manno-heptose-6-epimerase.